The sequence spans 521 residues: 2,3-bisphosphoglycerate-independent phosphoglycerate mutase 2 (521 aa).

Mn(2+)-binding residues include Asp20 and Ser70. Ser70 serves as the catalytic Phosphoserine intermediate. Residues His131, 161 to 162, Arg193, Arg199, 270 to 273, and Lys343 each bind substrate; these read RD and RPDR. Positions 410, 414, 451, 452, and 470 each coordinate Mn(2+).

Belongs to the BPG-independent phosphoglycerate mutase family. The cofactor is Mn(2+).

It catalyses the reaction (2R)-2-phosphoglycerate = (2R)-3-phosphoglycerate. The protein operates within carbohydrate degradation; glycolysis; pyruvate from D-glyceraldehyde 3-phosphate: step 3/5. Catalyzes the interconversion of 2-phosphoglycerate and 3-phosphoglycerate. This is 2,3-bisphosphoglycerate-independent phosphoglycerate mutase 2 from Methanosarcina acetivorans (strain ATCC 35395 / DSM 2834 / JCM 12185 / C2A).